Consider the following 750-residue polypeptide: uncharacterized protein (750 aa).

A run of 5 helical transmembrane segments spans residues 2–22, 33–53, 79–99, 116–136, and 143–163; these read FVLL…TNVI, SLIL…DIFI, LLVL…VVSL, LSIF…TIML, and IQSL…SPIA. Disordered regions lie at residues 385-461 and 571-651; these read DNKG…KKKE and NKEF…PLTA. Residues 398 to 411 are compositionally biased toward basic and acidic residues; it reads ENTKGDDNSSEKTD. Residues 412 to 424 are compositionally biased toward polar residues; sequence TVSVSTKLKTTAD. Positions 425-436 are enriched in low complexity; the sequence is QSESTQMSSEST. Residues 437-451 show a composition bias toward polar residues; it reads ATGISSDPQSQGKMN. Basic and acidic residues predominate over residues 452 to 461; sequence NKSEEQKKKE. Residues 618 to 629 show a composition bias toward polar residues; it reads DSKGNTATNSDT. The chain crosses the membrane as a helical span at residues 724–744; it reads ATIVITLFLTVVLLAIAFFFF.

The protein to M.pneumoniae MPN_335.

The protein resides in the cell membrane. This is an uncharacterized protein from Mycoplasma pneumoniae (strain ATCC 29342 / M129 / Subtype 1) (Mycoplasmoides pneumoniae).